The following is a 135-amino-acid chain: Galectin-1 (135 aa).

Alanine 2 is subject to N-acetylalanine. Positions 4 to 135 (GLVASNLNLK…DFKIKCVAFD (132 aa)) constitute a Galectin domain. Residues lysine 13 and lysine 29 each carry the N6-acetyllysine modification. Serine 30 is modified (phosphoserine). Residues 45–49 (HFNPR), histidine 53, asparagine 62, and 69–72 (WGTE) contribute to the a beta-D-galactoside site. An N6-acetyllysine; alternate modification is found at lysine 108. Lysine 108 is subject to N6-succinyllysine; alternate. Lysine 128 bears the N6-acetyllysine mark.

Homodimer. Binds LGALS3BP. Interacts with CD2, CD3, CD4, CD6, CD7, CD43, ALCAM and CD45. Interacts with laminin (via poly-N-acetyllactosamine). Interacts with SUSD2.

The protein resides in the secreted. The protein localises to the extracellular space. Its subcellular location is the extracellular matrix. Its function is as follows. Lectin that binds beta-galactoside and a wide array of complex carbohydrates. Plays a role in regulating apoptosis, cell proliferation and cell differentiation. Inhibits CD45 protein phosphatase activity and therefore the dephosphorylation of Lyn kinase. Strong inducer of T-cell apoptosis. In Pongo abelii (Sumatran orangutan), this protein is Galectin-1 (LGALS1).